The sequence spans 411 residues: MDKLLDRFFNYVSFDTQAKANVKSVPSTQGQRKLAQALQQELLTLGFSHVTLSDHGCVMATLPANVSWPVPTIGFIAHLDTSPDFSGKNVNPQIVENYRGGDIALGIGDEVLSPVMFPVLHQLLGHTLITTDGKTLLGADDKAGIAEIITAMVRLKHRNVPHGDIRIAFTPDEEVGKGAQFFNVAEFDAQWAYTVDGGGIGELEFENFNAASVAIKIVGNNVHPGSAKGVMVNALSLATRYHQELPVDETPECTEGYDGFYHLQSIKGTVERAEMHYIVRDFNRDSFEARKKNMVDIAKRVGKGLHRDCYIEIVIDDSYYNMREQIIKHPHIIELAQQAMLDCDITPIMKPIRGGTDGAQLSFKGLPCPNIFTGGYNYHGKHEFITLEGMEKAVAVIMRISELTAKRAKES.

Residue His78 participates in Zn(2+) binding. Asp80 is an active-site residue. A Zn(2+)-binding site is contributed by Asp140. Glu173 (proton acceptor) is an active-site residue. Zn(2+) contacts are provided by Glu174, Asp196, and His379.

This sequence belongs to the peptidase M20B family. Requires Zn(2+) as cofactor.

The protein resides in the cytoplasm. It catalyses the reaction Release of the N-terminal residue from a tripeptide.. Its function is as follows. Cleaves the N-terminal amino acid of tripeptides. This chain is Peptidase T, found in Yersinia pestis bv. Antiqua (strain Antiqua).